Reading from the N-terminus, the 598-residue chain is Urease subunit alpha (598 aa).

The Urease domain maps to 136-598; that stretch reads GGLDTHVHWL…APLAQRYFLF (463 aa). Ni(2+) is bound by residues His141, His143, and Lys223. Position 223 is an N6-carboxylysine (Lys223). His225 is a binding site for substrate. His252 and His278 together coordinate Ni(2+). Residue His326 is the Proton donor of the active site. Residue Asp366 participates in Ni(2+) binding.

This sequence belongs to the metallo-dependent hydrolases superfamily. Urease alpha subunit family. Heterotrimer of UreA (gamma), UreB (beta) and UreC (alpha) subunits. Three heterotrimers associate to form the active enzyme. Ni cation is required as a cofactor. Carboxylation allows a single lysine to coordinate two nickel ions.

Its subcellular location is the cytoplasm. It catalyses the reaction urea + 2 H2O + H(+) = hydrogencarbonate + 2 NH4(+). It functions in the pathway nitrogen metabolism; urea degradation; CO(2) and NH(3) from urea (urease route): step 1/1. The chain is Urease subunit alpha from Ureaplasma urealyticum serovar 10 (strain ATCC 33699 / Western).